A 157-amino-acid chain; its full sequence is Endoribonuclease YbeY (157 aa).

Positions 114, 118, and 124 each coordinate Zn(2+).

The protein belongs to the endoribonuclease YbeY family. It depends on Zn(2+) as a cofactor.

The protein localises to the cytoplasm. Its function is as follows. Single strand-specific metallo-endoribonuclease involved in late-stage 70S ribosome quality control and in maturation of the 3' terminus of the 16S rRNA. This Salmonella dublin (strain CT_02021853) protein is Endoribonuclease YbeY.